Consider the following 343-residue polypeptide: Ribosomal RNA small subunit methyltransferase C (343 aa).

This sequence belongs to the methyltransferase superfamily. RsmC family. As to quaternary structure, monomer.

The protein resides in the cytoplasm. The catalysed reaction is guanosine(1207) in 16S rRNA + S-adenosyl-L-methionine = N(2)-methylguanosine(1207) in 16S rRNA + S-adenosyl-L-homocysteine + H(+). Functionally, specifically methylates the guanine in position 1207 of 16S rRNA in the 30S particle. The chain is Ribosomal RNA small subunit methyltransferase C from Escherichia fergusonii (strain ATCC 35469 / DSM 13698 / CCUG 18766 / IAM 14443 / JCM 21226 / LMG 7866 / NBRC 102419 / NCTC 12128 / CDC 0568-73).